The primary structure comprises 274 residues: Merozoite surface protein 2 (274 aa).

Positions 1–20 are cleaved as a signal peptide; sequence MKVIKTLSIINFFIFVTFNI. 2 N-linked (GlcNAc...) asparagine glycosylation sites follow: asparagine 22 and asparagine 36. The segment at 43–234 is disordered; it reads MAESKPPTGT…SDSQKECTDG (192 aa). Positions 44–200 are polymorphic region; sequence AESKPPTGTG…EQTESPELQS (157 aa). Repeat copies occupy residues 53-62 and 63-72. The interval 53–72 is 2 X 10 AA tandem repeats of G-A-S-G-S-A-G-S-G-[AD]; that stretch reads GASGSAGSGAGASGSAGSGD. Over residues 53–72 the composition is skewed to gly residues; that stretch reads GASGSAGSGAGASGSAGSGD. A compositionally biased stretch (low complexity) spans 91 to 121; it reads SSSTPATTTTTTTTTTTTTTNDAEASTSTSS. Polar residues-rich tracts occupy residues 122-131, 140-167, and 174-202; these read ENPNHNNAET, QKSNQANKETQNNSNVQQDSQTKSNVPP, and KSPTAQPEQAENSAPTAEQTESPELQSAP. Asparagine 151 carries an N-linked (GlcNAc...) asparagine glycan. Residue asparagine 223 is glycosylated (N-linked (GlcNAc...) asparagine). A disulfide bridge connects residues cysteine 231 and cysteine 239. The N-linked (GlcNAc...) asparagine glycan is linked to asparagine 248. Asparagine 248 is lipidated: GPI-anchor amidated asparagine. Residues 249–274 constitute a propeptide, removed in mature form; that stretch reads SSNIASINKFVVLISAKLVLSFAIFI.

It is found in the cell membrane. May play a role in the merozoite attachment to the erythrocyte. This Plasmodium falciparum (isolate kf1916) protein is Merozoite surface protein 2.